The primary structure comprises 329 residues: MSRILEGDPVEGEKSWENELRPQKFEDFPGQDDVKEKLKVFVAAAKHRGESLDHVLLCGPPGLGKTTLSKIIANDMGAEIKMTSAPAIDKKGDLAAILTSLKPHSVLFIDEIHRLSRHVEEYLYTAMEDYYIDIVTGEGLGARSMKFTLAPFTLVGATTRAGLLNPPFRDRFGIVERLQFYDKDALRQILMRSAEILKVEIDEEGAEEVARRSRGTPRVANRLLKRVRDYAQVKGNGVVSKDIAVYALNQLGVDQYGLDLMDRRILSLIQDKYAGGPVGIDTIAAALSEERDTLEEVYEPFLIQEGFIQKTQRGRVITEFAKSSVLADK.

A disordered region spans residues 1 to 20; the sequence is MSRILEGDPVEGEKSWENEL. The segment at 1 to 181 is large ATPase domain (RuvB-L); sequence MSRILEGDPV…FGIVERLQFY (181 aa). Basic and acidic residues predominate over residues 11–20; sequence EGEKSWENEL. ATP contacts are provided by residues Leu-20, Arg-21, Gly-62, Lys-65, Thr-66, Thr-67, 128–130, Arg-171, Tyr-181, and Arg-218; that span reads EDY. Thr-66 is a Mg(2+) binding site. A small ATPAse domain (RuvB-S) region spans residues 182 to 252; it reads DKDALRQILM…IAVYALNQLG (71 aa). A head domain (RuvB-H) region spans residues 255-329; the sequence is QYGLDLMDRR…FAKSSVLADK (75 aa). Positions 291, 310, and 315 each coordinate DNA.

It belongs to the RuvB family. In terms of assembly, homohexamer. Forms an RuvA(8)-RuvB(12)-Holliday junction (HJ) complex. HJ DNA is sandwiched between 2 RuvA tetramers; dsDNA enters through RuvA and exits via RuvB. An RuvB hexamer assembles on each DNA strand where it exits the tetramer. Each RuvB hexamer is contacted by two RuvA subunits (via domain III) on 2 adjacent RuvB subunits; this complex drives branch migration. In the full resolvosome a probable DNA-RuvA(4)-RuvB(12)-RuvC(2) complex forms which resolves the HJ.

It localises to the cytoplasm. The catalysed reaction is ATP + H2O = ADP + phosphate + H(+). The RuvA-RuvB-RuvC complex processes Holliday junction (HJ) DNA during genetic recombination and DNA repair, while the RuvA-RuvB complex plays an important role in the rescue of blocked DNA replication forks via replication fork reversal (RFR). RuvA specifically binds to HJ cruciform DNA, conferring on it an open structure. The RuvB hexamer acts as an ATP-dependent pump, pulling dsDNA into and through the RuvAB complex. RuvB forms 2 homohexamers on either side of HJ DNA bound by 1 or 2 RuvA tetramers; 4 subunits per hexamer contact DNA at a time. Coordinated motions by a converter formed by DNA-disengaged RuvB subunits stimulates ATP hydrolysis and nucleotide exchange. Immobilization of the converter enables RuvB to convert the ATP-contained energy into a lever motion, pulling 2 nucleotides of DNA out of the RuvA tetramer per ATP hydrolyzed, thus driving DNA branch migration. The RuvB motors rotate together with the DNA substrate, which together with the progressing nucleotide cycle form the mechanistic basis for DNA recombination by continuous HJ branch migration. Branch migration allows RuvC to scan DNA until it finds its consensus sequence, where it cleaves and resolves cruciform DNA. The polypeptide is Holliday junction branch migration complex subunit RuvB (Bdellovibrio bacteriovorus (strain ATCC 15356 / DSM 50701 / NCIMB 9529 / HD100)).